The primary structure comprises 237 residues: Uridylate kinase (237 aa).

An ATP-binding site is contributed by 11-14 (KLSG). Position 53 (G53) interacts with UMP. Positions 54 and 58 each coordinate ATP. UMP-binding positions include D73 and 134 to 141 (TGNPFFTT). ATP is bound by residues T161, Y167, and D170.

It belongs to the UMP kinase family. In terms of assembly, homohexamer.

The protein resides in the cytoplasm. It catalyses the reaction UMP + ATP = UDP + ADP. It functions in the pathway pyrimidine metabolism; CTP biosynthesis via de novo pathway; UDP from UMP (UMPK route): step 1/1. Its activity is regulated as follows. Inhibited by UTP. In terms of biological role, catalyzes the reversible phosphorylation of UMP to UDP. The chain is Uridylate kinase from Burkholderia lata (strain ATCC 17760 / DSM 23089 / LMG 22485 / NCIMB 9086 / R18194 / 383).